Reading from the N-terminus, the 66-residue chain is Large ribosomal subunit protein bL35 (66 aa).

This sequence belongs to the bacterial ribosomal protein bL35 family.

This is Large ribosomal subunit protein bL35 from Brucella melitensis biotype 1 (strain ATCC 23456 / CCUG 17765 / NCTC 10094 / 16M).